A 492-amino-acid polypeptide reads, in one-letter code: MTLWINGDWITGQGASRVKRNPVSGEVLWQGNDADAAQVEQACRAARAAFPRWARLSLAERQVVVERFAGLLESNKAELTAIIARETGKLRWEAATEVTAMINKIAISIKAYHVRTGEQRSEMPDGAASLRHRPHGVLAVFGPYNFPGHLPNGHIVPALLAGNTIIFKPSELTPWSGEAVMRLWQQAGLPPGVLNLVQGGRETGQALSALEDLDGLLFTGRANTGYQLHRQLSGQPEKILALEMGGNNPLIIDEVADIDAAVHLTIQSAFVTAGQRCTCARRLLLKSGAQGDAFLARLVAVSQRLTPGNWDDEPQPFIGGLISEQAAQQVVTAWQQLEAMGGRTLLAPRLLQLETSLLTPGIIEMTGVAGVPDEEVFGPLLRVWRYDSFEEAILMANNTRFGLSCGLVSPEREKFDQLLLEARAGIVNWNKPLTGAASTAPFGGIGASGNHRPSAWYAADYCAWPMASLESDSLTLPATLNPGLDFSDEVVR.

Position 220–225 (220–225 (GRANTG)) interacts with NAD(+). Residues Glu243 and Cys277 contribute to the active site.

This sequence belongs to the aldehyde dehydrogenase family. AstD subfamily.

The enzyme catalyses N-succinyl-L-glutamate 5-semialdehyde + NAD(+) + H2O = N-succinyl-L-glutamate + NADH + 2 H(+). It participates in amino-acid degradation; L-arginine degradation via AST pathway; L-glutamate and succinate from L-arginine: step 4/5. In terms of biological role, catalyzes the NAD-dependent reduction of succinylglutamate semialdehyde into succinylglutamate. The protein is N-succinylglutamate 5-semialdehyde dehydrogenase of Shigella boydii serotype 4 (strain Sb227).